The following is a 434-amino-acid chain: Glutamate-1-semialdehyde 2,1-aminomutase (434 aa).

Lysine 271 carries the N6-(pyridoxal phosphate)lysine modification.

The protein belongs to the class-III pyridoxal-phosphate-dependent aminotransferase family. HemL subfamily. As to quaternary structure, homodimer. The cofactor is pyridoxal 5'-phosphate.

It localises to the cytoplasm. The enzyme catalyses (S)-4-amino-5-oxopentanoate = 5-aminolevulinate. It functions in the pathway porphyrin-containing compound metabolism; protoporphyrin-IX biosynthesis; 5-aminolevulinate from L-glutamyl-tRNA(Glu): step 2/2. The protein operates within porphyrin-containing compound metabolism; chlorophyll biosynthesis. The polypeptide is Glutamate-1-semialdehyde 2,1-aminomutase (Prochlorococcus marinus (strain MIT 9312)).